Reading from the N-terminus, the 343-residue chain is MLLLKKQTEDISSVYEIREKLGSGAFSEVMLAQERGSAHLVALKCIPKKALRGKEALVENEIAVLRRISHPNIVALEDVHESPSHLYLAMELVTGGELFDRIMERGSYTEKDASHLVGQVLGAVSYLHSLGIVHRDLKPENLLYATPFEDSKIMVSDFGLSKIQAGNMLGTACGTPGYVAPELLEQKPYGKAVDVWALGVISYILLCGYPPFYDESDPELFSQILRASYEFDSPFWDDISESAKDFIRHLLERDPQKRFTCQQALQHLWISGDAAFDRDILGSVSEQIQKNFARTHWKRAFNATSFLRHIRKLGQSPEGEEASRQCMTRHSHPGLGTSQSPKW.

The region spanning 15–270 (YEIREKLGSG…CQQALQHLWI (256 aa)) is the Protein kinase domain. ATP contacts are provided by residues 21–29 (LGSGAFSEV) and lysine 44. Catalysis depends on aspartate 136, which acts as the Proton acceptor. Residues 290–311 (KNFARTHWKRAFNATSFLRHIR) are calmodulin-binding. Residues 314–343 (GQSPEGEEASRQCMTRHSHPGLGTSQSPKW) form a disordered region. A Phosphoserine modification is found at serine 338.

Belongs to the protein kinase superfamily. CAMK Ser/Thr protein kinase family. CaMK subfamily. As to expression, expressed at highest levels in adult brain, and expressed in embryo. In the adult brain detected at high levels in the anterior olfactory nuclei, piriform cortex, septal nuclei, bed nuclei of the stria terminalis, hippocampal pyramidal cells, dentate granule cells, amygdala, hypothalamic nuclei, parabrachial nucleus, and nucleus of the solitary tract. Expressed at lower levels in adult ovary and heart and at very low levels in testis, lung and muscle.

The protein resides in the cytoplasm. Its subcellular location is the nucleus. It carries out the reaction L-seryl-[protein] + ATP = O-phospho-L-seryl-[protein] + ADP + H(+). It catalyses the reaction L-threonyl-[protein] + ATP = O-phospho-L-threonyl-[protein] + ADP + H(+). Activated by Ca(2+)/calmodulin. Calcium/calmodulin-dependent protein kinase belonging to a proposed calcium-triggered signaling cascade. In vitro phosphorylates CREB1 and SYN1/synapsin I. Phosphorylates and activates CAMK1. The polypeptide is Calcium/calmodulin-dependent protein kinase type 1B (Pnck) (Mus musculus (Mouse)).